The chain runs to 426 residues: Enolase (426 aa).

(2R)-2-phosphoglycerate is bound at residue glutamine 163. Glutamate 205 (proton donor) is an active-site residue. Aspartate 242, glutamate 285, and aspartate 312 together coordinate Mg(2+). (2R)-2-phosphoglycerate contacts are provided by lysine 337, arginine 366, serine 367, and lysine 388. The active-site Proton acceptor is lysine 337.

The protein belongs to the enolase family. Mg(2+) is required as a cofactor.

The protein localises to the cytoplasm. The protein resides in the secreted. It localises to the cell surface. It catalyses the reaction (2R)-2-phosphoglycerate = phosphoenolpyruvate + H2O. The protein operates within carbohydrate degradation; glycolysis; pyruvate from D-glyceraldehyde 3-phosphate: step 4/5. In terms of biological role, catalyzes the reversible conversion of 2-phosphoglycerate (2-PG) into phosphoenolpyruvate (PEP). It is essential for the degradation of carbohydrates via glycolysis. The polypeptide is Enolase (Gluconobacter oxydans (strain 621H) (Gluconobacter suboxydans)).